Reading from the N-terminus, the 551-residue chain is Glucans biosynthesis protein D (551 aa).

Residues 1–32 (MDRRRFIKGSMAMAAVCGTSGIASLFSQAAFA) constitute a signal peptide (tat-type signal).

This sequence belongs to the OpgD/OpgG family. Post-translationally, predicted to be exported by the Tat system. The position of the signal peptide cleavage has not been experimentally proven.

Its subcellular location is the periplasm. It functions in the pathway glycan metabolism; osmoregulated periplasmic glucan (OPG) biosynthesis. Its function is as follows. Probably involved in the control of the structural glucose backbone of osmoregulated periplasmic glucans (OPGs). This Escherichia coli (strain K12 / MC4100 / BW2952) protein is Glucans biosynthesis protein D.